We begin with the raw amino-acid sequence, 487 residues long: MFRQLKKNLVATLIAAMTIGQVAPAFADSADTLPDMGTSAGSTLSIGQEMQMGDYYVRQLRGSAPLINDPLLTQYINSLGMRLVSHANSVKTPFHFFLINNDEINAFAFFGGNVVLHSALFRYSDNESQLASVMAHEISHVTQRHLARAMEDQQRNAPLTWVGALGSILLAMASPQAGMAALTGTLAGTRQGMISFTQQNEQEADRIGIQVLQRSGFDPQAMPTFLEKLLDQARYSSRPPEILLTHPLPESRLADARNRANQMRPMVVQSSEDFYLAKARTLGMYNSGRNQLTSDLLDEWAKGNVRQQRAAQYGRALQAMEANKYDEARKTLQPLLAAEPGNAWYLDLATDIDLGQNKANEAINRLKNARDLRTNPVLQLNLANAYLQGGQPQEAANILNRYTFNNKDDSNGWDLLAQAEAALNNRDQELAARAEGYALAGRLDQAISLLSSASSQVKLGSLQQARYDARIDQLRQLQERFKPYTKM.

The N-terminal stretch at 1 to 27 (MFRQLKKNLVATLIAAMTIGQVAPAFA) is a signal peptide. His-136 lines the Zn(2+) pocket. Residue Glu-137 is part of the active site. Zn(2+) contacts are provided by His-140 and Glu-201. Asp-205 functions as the Proton donor in the catalytic mechanism. TPR repeat units follow at residues 309 to 342 (RAAQ…EPGN), 344 to 376 (WYLD…RTNP), 377 to 409 (VLQL…NKDD), and 427 to 460 (DQEL…VKLG).

This sequence belongs to the peptidase M48 family. BepA subfamily. The cofactor is Zn(2+).

It localises to the periplasm. Functionally, functions both as a chaperone and a metalloprotease. Maintains the integrity of the outer membrane by promoting either the assembly or the elimination of outer membrane proteins, depending on their folding state. In Escherichia coli O157:H7, this protein is Beta-barrel assembly-enhancing protease.